The following is a 362-amino-acid chain: S-adenosylmethionine-dependent nucleotide dehydratase RSAD2 (362 aa).

A disordered region spans residues 47–73; sequence EQPQVRGEPEDTQETQEDGNSTQPTTP. The span at 64–73 shows a compositional bias: polar residues; that stretch reads DGNSTQPTTP. Positions 70-290 constitute a Radical SAM core domain; sequence PTTPVSVNYH…LERHKEVSCL (221 aa). C84, C88, and C91 together coordinate [4Fe-4S] cluster. The residue at position 198 (K198) is an N6-acetyllysine. Residue K207 forms a Glycyl lysine isopeptide (Lys-Gly) (interchain with G-Cter in ubiquitin) linkage.

This sequence belongs to the radical SAM superfamily. RSAD2 family. Homodimer. Interacts with IRAK1 and TRAF6. Interacts with FPPS. Interacts with HADHB. Interacts (via C-terminus) with VAPA/VAP33 (via C-terminus). [4Fe-4S] cluster serves as cofactor. Post-translationally, acetylated by HAT1. HAT1-mediated acetylation of Lys-198 in turn recruits UBE4A that stimulates RSAD2 polyubiquitination leading to proteasomal degradation. 'Lys-6'-linked polyubiquitination at Lys-207 leads to RSAD2 protein degradation. As to expression, expressed at higher levels in atherosclerotic arteries than in normal arteries.

The protein resides in the endoplasmic reticulum membrane. Its subcellular location is the golgi apparatus. It is found in the endoplasmic reticulum. It localises to the lipid droplet. The protein localises to the mitochondrion. The protein resides in the mitochondrion inner membrane. Its subcellular location is the mitochondrion outer membrane. The catalysed reaction is CTP + AH2 + S-adenosyl-L-methionine = 3'-deoxy-3',4'-didehydro-CTP + 5'-deoxyadenosine + L-methionine + A + H2O + H(+). IRAK1 and TRAF6 synergistically activate RSAD2 increasing its activity with CTP as substrate about 10-fold. In terms of biological role, interferon-inducible antiviral protein which plays a major role in the cell antiviral state induced by type I and type II interferon. Catalyzes the conversion of cytidine triphosphate (CTP) to 3'-deoxy-3',4'-didehydro-CTP (ddhCTP) via a SAM-dependent radical mechanism. In turn, ddhCTP acts as a chain terminator for the RNA-dependent RNA polymerases from multiple viruses and directly inhibits viral replication. Therefore, inhibits a wide range of DNA and RNA viruses. Also promotes TLR7 and TLR9-dependent production of IFN-beta production in plasmacytoid dendritic cells (pDCs) by facilitating 'Lys-63'-linked ubiquitination of IRAK1 by TRAF6. Plays a role in CD4+ T-cells activation and differentiation. Facilitates T-cell receptor (TCR)-mediated GATA3 activation and optimal T-helper 2 (Th2) cytokine production by modulating NFKB1 and JUNB activities. Can inhibit secretion of soluble proteins. This chain is S-adenosylmethionine-dependent nucleotide dehydratase RSAD2, found in Mus musculus (Mouse).